We begin with the raw amino-acid sequence, 149 residues long: Macrodomain Ter protein (149 aa).

This sequence belongs to the MatP family. As to quaternary structure, homodimer.

Its subcellular location is the cytoplasm. Required for spatial organization of the terminus region of the chromosome (Ter macrodomain) during the cell cycle. Prevents early segregation of duplicated Ter macrodomains during cell division. Binds specifically to matS, which is a 13 bp signature motif repeated within the Ter macrodomain. This Vibrio parahaemolyticus serotype O3:K6 (strain RIMD 2210633) protein is Macrodomain Ter protein.